We begin with the raw amino-acid sequence, 367 residues long: Phospho-N-acetylmuramoyl-pentapeptide-transferase (367 aa).

A run of 10 helical transmembrane segments spans residues 30–50 (AAAITALLITLVAGPGFIALL), 71–91 (LPTMGGLLIIISVEVSVLLWA), 94–114 (TDPHVWLIMLALLWMGVIGFI), 138–158 (ISLGLVVGIYTSMDPVFSVLM), 169–189 (LTIDYGIFYVPVVIFIITALS), 200–220 (GLAAGSSAIVIFGLGGFAYLA), 237–257 (GGEIAVVCMAATMACVGFLWF), 264–284 (IIMGDTGSLALGSTIAVTALL), 289–309 (LLLPVLGGLFFLETLSVSLQV), and 344–364 (KIVIRFWIVTILLFLTSLMTL).

It belongs to the glycosyltransferase 4 family. MraY subfamily. Mg(2+) is required as a cofactor.

The protein localises to the cell inner membrane. The enzyme catalyses UDP-N-acetyl-alpha-D-muramoyl-L-alanyl-gamma-D-glutamyl-meso-2,6-diaminopimeloyl-D-alanyl-D-alanine + di-trans,octa-cis-undecaprenyl phosphate = di-trans,octa-cis-undecaprenyl diphospho-N-acetyl-alpha-D-muramoyl-L-alanyl-D-glutamyl-meso-2,6-diaminopimeloyl-D-alanyl-D-alanine + UMP. It participates in cell wall biogenesis; peptidoglycan biosynthesis. Functionally, catalyzes the initial step of the lipid cycle reactions in the biosynthesis of the cell wall peptidoglycan: transfers peptidoglycan precursor phospho-MurNAc-pentapeptide from UDP-MurNAc-pentapeptide onto the lipid carrier undecaprenyl phosphate, yielding undecaprenyl-pyrophosphoryl-MurNAc-pentapeptide, known as lipid I. The sequence is that of Phospho-N-acetylmuramoyl-pentapeptide-transferase from Chlorobium phaeovibrioides (strain DSM 265 / 1930) (Prosthecochloris vibrioformis (strain DSM 265)).